Consider the following 316-residue polypeptide: Methionyl-tRNA formyltransferase (316 aa).

Residue 113–116 (SLLP) participates in (6S)-5,6,7,8-tetrahydrofolate binding.

Belongs to the Fmt family.

It carries out the reaction L-methionyl-tRNA(fMet) + (6R)-10-formyltetrahydrofolate = N-formyl-L-methionyl-tRNA(fMet) + (6S)-5,6,7,8-tetrahydrofolate + H(+). Attaches a formyl group to the free amino group of methionyl-tRNA(fMet). The formyl group appears to play a dual role in the initiator identity of N-formylmethionyl-tRNA by promoting its recognition by IF2 and preventing the misappropriation of this tRNA by the elongation apparatus. This Sodalis glossinidius (strain morsitans) protein is Methionyl-tRNA formyltransferase.